The primary structure comprises 248 residues: Granulin (248 aa).

It belongs to the polyhedrin family.

Component of the virus occlusion bodies, which are large proteinaceous structures, that protect the virus from the outside environment for extended periods until they are ingested by insect larvae. This is Granulin from Xestia c-nigrum granulosis virus (XnGV).